An 855-amino-acid chain; its full sequence is Zinc finger protein 814 (855 aa).

Residues 15–91 (VTFEDVAVNF…PMAGVSPKKA (77 aa)) form the KRAB domain. The C2H2-type 1; degenerate zinc-finger motif lies at 120–142 (HRCEAWGNKLYDSGNFHQHQNEH). C2H2-type zinc fingers lie at residues 242–264 (YVCC…QRVH), 269–291 (HECG…QRVH), 296–318 (HECG…QRVH), 324–346 (YECG…QRVH), 352–374 (YECG…QRVH), 380–402 (YECG…QRVH), 408–430 (YECG…QRFH), 436–458 (YGCE…QRVH), 464–486 (FKCG…QRVH), 492–514 (YQCG…QRVH), 520–542 (YECG…QQIH), 548–570 (YECG…QRVH), 576–598 (YGCG…QRVH), 604–626 (YECG…QRMH), 632–654 (YKCG…QRVH), 660–682 (FKCG…QHGH), 688–710 (YVCR…QRIH), 716–738 (YACE…QRVH), 744–766 (YECN…KRIH), 772–794 (YECS…KRVH), 800–822 (YECS…KRVH), and 828–850 (YKCE…QSSH). A Glycyl lysine isopeptide (Lys-Gly) (interchain with G-Cter in SUMO2) cross-link involves residue lysine 335. A Glycyl lysine isopeptide (Lys-Gly) (interchain with G-Cter in SUMO2) cross-link involves residue lysine 391.

The sequence is that of Zinc finger protein 814 (ZNF814) from Homo sapiens (Human).